A 238-amino-acid chain; its full sequence is Probable transcriptional regulatory protein CTA_0499 (238 aa).

Positions 1 to 21 (MAGHSKWANTKHRKERADHKK) are disordered. Basic residues predominate over residues 9 to 21 (NTKHRKERADHKK).

The protein belongs to the TACO1 family.

Its subcellular location is the cytoplasm. The sequence is that of Probable transcriptional regulatory protein CTA_0499 from Chlamydia trachomatis serovar A (strain ATCC VR-571B / DSM 19440 / HAR-13).